A 341-amino-acid chain; its full sequence is Methionine import ATP-binding protein MetN 1 (341 aa).

Residues 2–241 (IKLNQIVKRY…PQHEVTKRFV (240 aa)) form the ABC transporter domain. 38-45 (GFSGAGKS) serves as a coordination point for ATP.

The protein belongs to the ABC transporter superfamily. Methionine importer (TC 3.A.1.24) family. The complex is composed of two ATP-binding proteins (MetN), two transmembrane proteins (MetI) and a solute-binding protein (MetQ).

The protein localises to the cell membrane. It carries out the reaction L-methionine(out) + ATP + H2O = L-methionine(in) + ADP + phosphate + H(+). The catalysed reaction is D-methionine(out) + ATP + H2O = D-methionine(in) + ADP + phosphate + H(+). Functionally, part of the ABC transporter complex MetNIQ involved in methionine import. Responsible for energy coupling to the transport system. This Staphylococcus epidermidis (strain ATCC 12228 / FDA PCI 1200) protein is Methionine import ATP-binding protein MetN 1.